The chain runs to 380 residues: Cytochrome b (380 aa).

4 helical membrane passes run 34-54 (FGSL…LLAA), 78-99 (WLIR…YLHI), 114-134 (WNTG…GYVL), and 179-199 (FFTL…IHLT). The heme b site is built by His84 and His98. Residues His183 and His197 each contribute to the heme b site. Residue His202 coordinates a ubiquinone. Transmembrane regions (helical) follow at residues 227-247 (TKDI…ALFS), 289-309 (LGGV…PLLH), 321-341 (LSQL…WIGS), and 348-368 (FIII…ILFP).

It belongs to the cytochrome b family. The cytochrome bc1 complex contains 11 subunits: 3 respiratory subunits (MT-CYB, CYC1 and UQCRFS1), 2 core proteins (UQCRC1 and UQCRC2) and 6 low-molecular weight proteins (UQCRH/QCR6, UQCRB/QCR7, UQCRQ/QCR8, UQCR10/QCR9, UQCR11/QCR10 and a cleavage product of UQCRFS1). This cytochrome bc1 complex then forms a dimer. The cofactor is heme b.

The protein resides in the mitochondrion inner membrane. Its function is as follows. Component of the ubiquinol-cytochrome c reductase complex (complex III or cytochrome b-c1 complex) that is part of the mitochondrial respiratory chain. The b-c1 complex mediates electron transfer from ubiquinol to cytochrome c. Contributes to the generation of a proton gradient across the mitochondrial membrane that is then used for ATP synthesis. The chain is Cytochrome b (MT-CYB) from Eudyptes chrysocome (Western rockhopper penguin).